Here is a 296-residue protein sequence, read N- to C-terminus: tRNA uridine(34) hydroxylase (296 aa).

Residues 121 to 215 (AQPDVAVIDT…YLEDIPQDQS (95 aa)) form the Rhodanese domain. Cys-175 serves as the catalytic Cysteine persulfide intermediate.

This sequence belongs to the TrhO family.

The enzyme catalyses uridine(34) in tRNA + AH2 + O2 = 5-hydroxyuridine(34) in tRNA + A + H2O. Its function is as follows. Catalyzes oxygen-dependent 5-hydroxyuridine (ho5U) modification at position 34 in tRNAs. The protein is tRNA uridine(34) hydroxylase of Roseobacter denitrificans (strain ATCC 33942 / OCh 114) (Erythrobacter sp. (strain OCh 114)).